A 632-amino-acid polypeptide reads, in one-letter code: MSVHHAAYIDYALRVTENMTDVMTGSDTVTLKSYQHFVSRVFLGLDKMHSLLLFHETGVGKTITTVFILKHLKDVYTNWIIILLVKKALVEDPWTYSITKYAPEILKDCIFITYDDKNFHNKFFTNIKTISSRSRLCIIIDECHNFISKSIVKEDGKQRPTKSVYNYLLKNVALHHHKLICLSATPIVNSVKEFIMLVNLLRPKILNNISLFENKRLINESELINKLGAICSYIVTNEFSIFDDVEGSATFAKKNVYFQYVNMTQKQEQVYQKAKSAELKAGTSSFRIYRRMAATFTFDTFLDKTDKTPEEIVNEQVTLYKDFEKFIKTKKFSDHALSHFKKGQSLNGTSSADDISFLNELREHSCKFTDVCLRILASPGKCLVFEPFVNQSGINILLLYFSAFNISYIEFSSRTKNTRVQSVAEFNKRENTNGDLIKTCVFSLSGGEGISFFSINDIFILDMTWNEASLRQIIGRAIRLNSHVLTPEHRRYVYVHFIIARLSNGDPTVDEDLLDIIRNKSKEFTQLFKVFKHTSIEWIYEHQTNFSPVDDESGWGALISRSIDENPTTKRVPRIARGQNIWYSHSNRMITVYKGFKTDDGRLFDSDGNFIQTIQANPVIKIHNNKLVYVLD.

Positions 42–204 constitute a Helicase ATP-binding domain; it reads FLGLDKMHSL…IMLVNLLRPK (163 aa). 55–62 is a binding site for ATP; that stretch reads HETGVGKT. The DEXH box motif lies at 141-144; sequence DECH. Residues 367 to 532 enclose the Helicase C-terminal domain; that stretch reads KFTDVCLRIL…EFTQLFKVFK (166 aa). The tract at residues 457-524 is binding to the cap-specific mRNA (nucleoside-2'-O-)-methyltransferase; it reads DIFILDMTWN…DIIRNKSKEF (68 aa).

The protein belongs to the helicase family. NPH I subfamily. In terms of assembly, monomer. Interacts (via C-terminus) with RAP94 (via N-terminus). Interacts with the cap-specific mRNA (nucleoside-2'-O-)-methyltransferase.

Its subcellular location is the virion. It carries out the reaction a ribonucleoside 5'-triphosphate + H2O = a ribonucleoside 5'-diphosphate + phosphate + H(+). Functionally, DNA-dependent ATPase required for providing the needed energy to achieve the termination of early transcripts. Acts in concert with the RAP94 subunit of the virion RNA polymerase and the capping enzyme/VTF to catalyze release of UUUUUNU-containing nascent RNA from the elongation complex. NPH-I must bind ssDNA in order to exhibit ATPase activity. This is Nucleoside triphosphatase I (NPH1) from Rabbit fibroma virus (strain Kasza) (RFV).